Here is a 183-residue protein sequence, read N- to C-terminus: Segregation and condensation protein B (183 aa).

This sequence belongs to the ScpB family. As to quaternary structure, homodimer. Homodimerization may be required to stabilize the binding of ScpA to the Smc head domains. Component of a cohesin-like complex composed of ScpA, ScpB and the Smc homodimer, in which ScpA and ScpB bind to the head domain of Smc. The presence of the three proteins is required for the association of the complex with DNA.

The protein resides in the cytoplasm. Its function is as follows. Participates in chromosomal partition during cell division. May act via the formation of a condensin-like complex containing Smc and ScpA that pull DNA away from mid-cell into both cell halves. The polypeptide is Segregation and condensation protein B (Streptococcus pyogenes serotype M12 (strain MGAS2096)).